A 364-amino-acid polypeptide reads, in one-letter code: Protein BRI1-5 ENHANCED 1 (364 aa).

Residues 1–11 (MVREEQEEDDN) show a composition bias toward acidic residues. Positions 1–22 (MVREEQEEDDNNNNNNGGGERK) are disordered. NADP(+) contacts are provided by residues 44–49 (GGSGFV), Arg-69, 98–99 (DL), Tyr-202, Lys-206, Val-232, and Ser-244. Residue Lys-206 is the Proton donor of the active site.

This sequence belongs to the NAD(P)-dependent epimerase/dehydratase family. Monomer. Mainly present in cell elongating-containing tissues. Strongly expressed in roots and flowers, also observed in petioles, stems, leaves and siliques.

The protein resides in the cytoplasm. The protein operates within plant hormone biosynthesis; brassinosteroid biosynthesis. In terms of biological role, element of the brassinosteroid metabolic pathway that regulates typhasterol (TY), castasterone (CS) and brassinolide (BL) levels. Involved in the control of organ elongation. In Arabidopsis thaliana (Mouse-ear cress), this protein is Protein BRI1-5 ENHANCED 1.